Here is a 996-residue protein sequence, read N- to C-terminus: KK-1 biosynthesis cluster protein D (996 aa).

Disordered regions lie at residues 307 to 333 (HDTDGEKASTAPIRSNKLSQSKQPELD), 425 to 449 (EQDNQTNEEGTGEVQSQRDRRARDL), 489 to 556 (AGVA…ALRA), and 571 to 602 (STHSIHQRASVNTTAPTVARSSDSDDSDSLHS). Polar residues-rich tracts occupy residues 318–329 (PIRSNKLSQSKQ) and 428–439 (NQTNEEGTGEVQ). Composition is skewed to basic and acidic residues over residues 440–449 (SQRDRRARDL) and 500–527 (RAAEEGGCREKEAENAKTDEEQVQDKAA). Polar residues predominate over residues 572 to 590 (THSIHQRASVNTTAPTVAR).

The protein operates within secondary metabolite biosynthesis. Functionally, part of the gene cluster that mediates the biosynthesis of KK-1, a novel cyclic depsipeptide with 10 residues which is a promising active compound with high activity against many plant pathogens, especially Botrytis cinerea. The role of kk1D in KK-1 biosynthesis has still to be determined. The nonribosomal peptide synthetase (NRPS) kk1B catalyzes the elongation and cyclization of the decapeptide chain composed of 1 D-lactic acid residue (D-Lac), 1 pipecolic acid residue (Pip), 1 aspartic acid residue (Asp), 1 isoleucine residue (Ile), 1 glycine residue (Gly), 1 tyrosine residue (Tyr) and 4 valine residues (Val). The Asp, Ile and 3 Val residues are N-methylated by the 5 methyltransferase domains from the NRPS (found in modules 3, 5, 6, 7 and 9), whereas the Tyr residue is O-methylated by the cluster encoded O-methyltransferase kk1A. The thioesterase kk1J is likely to be involved in the corrective mechanism of peptide chain synthesis. The D-lactate dehydrogenase kk1H is involved in the synthesis of D-lactic acid from pyruvic acid, which is recognized by the A domain of the first kk1B module. The pyrroline-5-carboxylate reductase kk1I is involved in the synthesis of the L-pipecolic acid residue of KK-1 from delta-1-pyrroline-5-carboxylate (P5C), a metabolic intermediate of lysine. It is still unclear how kk1C and kk1D are involved in the production of KK-1. The polypeptide is KK-1 biosynthesis cluster protein D (Curvularia clavata).